The chain runs to 151 residues: MATLEQKLQELLQSSVEDLGCELWGIECQRAGRYLTVRLYIDKEGGVTVEDCADVSRQVSAILDVEDPIADKYNLEVSSPGLDRALFTLDQYQRYIGQEIVVHLRIPVLDRRKWQGKLEKIENDMLTLIVDGQEQILVFGNIQKANIIPKF.

The protein belongs to the RimP family.

It localises to the cytoplasm. Required for maturation of 30S ribosomal subunits. The protein is Ribosome maturation factor RimP of Pasteurella multocida (strain Pm70).